We begin with the raw amino-acid sequence, 299 residues long: GTPase Era (299 aa).

Positions 5–172 (KSGFVSIIGR…IDVLKTYLPE (168 aa)) constitute an Era-type G domain. A G1 region spans residues 13–20 (GRPNVGKS). GTP is bound at residue 13–20 (GRPNVGKS). Positions 39–43 (QTTRN) are G2. A G3 region spans residues 60–63 (DTPG). GTP is bound by residues 60–64 (DTPGI) and 122–125 (NKID). A G4 region spans residues 122–125 (NKID). The G5 stretch occupies residues 151 to 153 (ISA). Residues 203-280 (TSEEIPHAIG…YLELWVKVQR (78 aa)) enclose the KH type-2 domain.

Belongs to the TRAFAC class TrmE-Era-EngA-EngB-Septin-like GTPase superfamily. Era GTPase family. Monomer.

The protein resides in the cytoplasm. The protein localises to the cell membrane. Functionally, an essential GTPase that binds both GDP and GTP, with rapid nucleotide exchange. Plays a role in 16S rRNA processing and 30S ribosomal subunit biogenesis and possibly also in cell cycle regulation and energy metabolism. The chain is GTPase Era from Staphylococcus aureus (strain Mu3 / ATCC 700698).